The following is a 291-amino-acid chain: Elongation factor Ts (291 aa).

Residues 80–83 (TDFV) form an involved in Mg(2+) ion dislocation from EF-Tu region.

This sequence belongs to the EF-Ts family.

It localises to the cytoplasm. Associates with the EF-Tu.GDP complex and induces the exchange of GDP to GTP. It remains bound to the aminoacyl-tRNA.EF-Tu.GTP complex up to the GTP hydrolysis stage on the ribosome. This is Elongation factor Ts from Acinetobacter baumannii (strain AB307-0294).